The sequence spans 1268 residues: uncharacterized protein (1268 aa).

Residues 191–206 (KIVSVKPSKSSQQVDV) are compositionally biased toward low complexity. Disordered stretches follow at residues 191 to 235 (KIVS…SKKK) and 253 to 273 (NCRS…SKGC). Positions 223 to 235 (RKPEKSSQDSKKK) are enriched in basic and acidic residues. A CCHC-type zinc finger spans residues 239–256 (PTCFYCNKKGHYATNCRS). The Reverse transcriptase domain maps to 465–644 (EMGVIVPITY…KQVTFLGFVD (180 aa)). Positions 844–997 (VPEAPWKRIH…TPAECHFGRK (154 aa)) constitute an Integrase catalytic domain. Positions 1092–1268 (GDYSRSSVNP…RRERVRTTWR (177 aa)) are disordered. Composition is skewed to polar residues over residues 1127 to 1143 (VTSN…SRIT) and 1160 to 1169 (GSCSPTNNDV). Residues 1208–1221 (PSTSTGTPRGSTST) show a composition bias toward low complexity. Positions 1222 to 1249 (QLGQASTRNGSRYTASGRNPSCQGNRYS) are enriched in polar residues. The segment covering 1257–1268 (TARRERVRTTWR) has biased composition (basic and acidic residues).

This is an uncharacterized protein from Caenorhabditis elegans.